We begin with the raw amino-acid sequence, 131 residues long: Small ribosomal subunit protein uS8 (131 aa).

This sequence belongs to the universal ribosomal protein uS8 family. In terms of assembly, part of the 30S ribosomal subunit. Contacts proteins S5 and S12.

Its function is as follows. One of the primary rRNA binding proteins, it binds directly to 16S rRNA central domain where it helps coordinate assembly of the platform of the 30S subunit. This chain is Small ribosomal subunit protein uS8, found in Wolbachia pipientis subsp. Culex pipiens (strain wPip).